The following is a 112-amino-acid chain: uncharacterized protein (112 aa).

This is an uncharacterized protein from Aquifex aeolicus (strain VF5).